We begin with the raw amino-acid sequence, 431 residues long: Asparagine--tRNA ligase (431 aa).

It belongs to the class-II aminoacyl-tRNA synthetase family.

Its subcellular location is the cytoplasm. The catalysed reaction is tRNA(Asn) + L-asparagine + ATP = L-asparaginyl-tRNA(Asn) + AMP + diphosphate + H(+). The polypeptide is Asparagine--tRNA ligase (Thermococcus kodakarensis (strain ATCC BAA-918 / JCM 12380 / KOD1) (Pyrococcus kodakaraensis (strain KOD1))).